We begin with the raw amino-acid sequence, 360 residues long: MSSFSFESSARLPLNPRFKQILHATVKSYIDTAEPVGSKMLTQQYNFGLSSATIRNAMAVLESWGLLFQPHTSAGRIPSDSGYRVYVDELISPPTELIQQMRAALAENLGERQDLESLLQGATRLLATLSGCVALITAPQSVFVSVRHLQIVHIGEGRALVIVVTDALQTRSFLLDLPQPEMAEQLETLNNFLNLQLQNRRLDDLNAAAVEAMGGEFHWYTDFLRGLIALLQRVLQPPTGQLYVSGVGEILKQPEFAEPERIQAIVQLLEVERERLGPLISPTQRHSRQIVVRIGAENPLGPMQFCSLVSSTYYLNEVPVGSVGVLGPTRLPYDRAIASVQAASDHLCQVMQAEDEPHRW.

The protein belongs to the HrcA family.

Functionally, negative regulator of class I heat shock genes (grpE-dnaK-dnaJ and groELS operons). Prevents heat-shock induction of these operons. The chain is Heat-inducible transcription repressor HrcA from Gloeobacter violaceus (strain ATCC 29082 / PCC 7421).